The sequence spans 186 residues: T-cell receptor-associated transmembrane adapter 1 (186 aa).

The Extracellular portion of the chain corresponds to 1–7 (MSGISGC). Residues 8–28 (PFFLWGLLALLGLALVISLIF) form a helical; Signal-anchor for type III membrane protein membrane-spanning segment. The Cytoplasmic portion of the chain corresponds to 29–186 (NISHYVEKQR…LIRAKREPIN (158 aa)). Serine 46 carries the post-translational modification Phosphoserine. Tyrosine 79 bears the Phosphotyrosine mark. Residues 79 to 82 (YEQM) are interaction with PIK3R1. A disordered region spans residues 116-140 (SVKGKRRKPRKQNTHFSDKDGDEQL). The span at 118–128 (KGKRRKPRKQN) shows a compositional bias: basic residues. Residues 131–140 (FSDKDGDEQL) are compositionally biased toward basic and acidic residues.

Homodimer; disulfide-linked. Interacts with CD3Z. When phosphorylated, interacts with PIK3R1. In terms of processing, phosphorylated on tyrosines by LCK or FYN upon TCR activation. As to expression, strongly expressed in thymus, and to a lesser extent in spleen, lymph node and peripheral blood lymphocytes. Present in T-cells and NK cells, but not B-cells (at protein level).

It localises to the cell membrane. Stabilizes the TCR (T-cell antigen receptor)/CD3 complex at the surface of T-cells. The chain is T-cell receptor-associated transmembrane adapter 1 (TRAT1) from Homo sapiens (Human).